Reading from the N-terminus, the 400-residue chain is Phosphoglycerate kinase (400 aa).

Substrate-binding positions include 23–25, Arg-38, 61–64, Arg-120, and Arg-153; these read DLN and HFGR. ATP is bound by residues Lys-203, Glu-325, and 355 to 358; that span reads GGDT.

It belongs to the phosphoglycerate kinase family. In terms of assembly, monomer.

Its subcellular location is the cytoplasm. It carries out the reaction (2R)-3-phosphoglycerate + ATP = (2R)-3-phospho-glyceroyl phosphate + ADP. It functions in the pathway carbohydrate degradation; glycolysis; pyruvate from D-glyceraldehyde 3-phosphate: step 2/5. The protein is Phosphoglycerate kinase of Allorhizobium ampelinum (strain ATCC BAA-846 / DSM 112012 / S4) (Agrobacterium vitis (strain S4)).